A 156-amino-acid polypeptide reads, in one-letter code: Small ribosomal subunit protein uS7 (156 aa).

The protein belongs to the universal ribosomal protein uS7 family. As to quaternary structure, part of the 30S ribosomal subunit. Contacts proteins S9 and S11.

One of the primary rRNA binding proteins, it binds directly to 16S rRNA where it nucleates assembly of the head domain of the 30S subunit. Is located at the subunit interface close to the decoding center, probably blocks exit of the E-site tRNA. The sequence is that of Small ribosomal subunit protein uS7 from Bacillus pumilus (strain SAFR-032).